A 293-amino-acid polypeptide reads, in one-letter code: MALEMRLPVARKPLSESLGRESKKHLVVPGDTITTDTGFMRGHGTYMGEEKLIASVAGSVERVNKLICVKALKTRYNGEVGDIVVGRITEVQQKRWKVETNSRLDSVLLLSSMNLPGGELRRRSAEDELAMRGFLQEGDLISAEVQAVFSDGAVSLHTRSLKYGKLGQGVLVQVSPSLVKRQKTHFHDLPCGASVILGNNGFIWVYPTPEHKEDDAGGFIANLEPVSLTDREVISRLRNCIVSLATQRMMLYDTSILYCYEASLPHQIKDILKPEIMEEIVMETRQRLLEQEG.

The 81-residue stretch at 79 to 159 (EVGDIVVGRI…SDGAVSLHTR (81 aa)) folds into the S1 motif domain. Residue Ser124 is modified to Phosphoserine.

Belongs to the RRP4 family. Component of the RNA exosome core complex (Exo-9), composed of EXOSC1, EXOSC2, EXOSC3, EXOSC4, EXOSC5, EXOSC6, EXOSC7, EXOSC8 and EXOSC9; within the complex interacts with EXOSC4 and EXOSC7. The catalytically inactive RNA exosome core complex (Exo-9) associates with the catalytic subunit EXOSC10/RRP6. Exo-9 may associate with DIS3 to form the nucleolar exosome complex, or DIS3L to form the cytoplasmic exosome complex. Exo-9 is formed by a hexameric base ring consisting of the heterodimers EXOSC4-EXOSC9, EXOSC5-EXOSC8 and EXOSC6-EXOSC7, and a cap ring consisting of EXOSC1, EXOSC2 and EXOSC3. The RNA exosome complex associates with cofactors C1D/RRP47, MPHOSPH6/MPP6 and MTREX/MTR4. Interacts with GTPBP1. Interacts with ZFP36L1 (via N-terminus).

It is found in the cytoplasm. The protein resides in the nucleus. Its subcellular location is the nucleolus. Non-catalytic component of the RNA exosome complex which has 3'-&gt;5' exoribonuclease activity and participates in a multitude of cellular RNA processing and degradation events. In the nucleus, the RNA exosome complex is involved in proper maturation of stable RNA species such as rRNA, snRNA and snoRNA, in the elimination of RNA processing by-products and non-coding 'pervasive' transcripts, such as antisense RNA species and promoter-upstream transcripts (PROMPTs), and of mRNAs with processing defects, thereby limiting or excluding their export to the cytoplasm. The RNA exosome may be involved in Ig class switch recombination (CSR) and/or Ig variable region somatic hypermutation (SHM) by targeting AICDA deamination activity to transcribed dsDNA substrates. In the cytoplasm, the RNA exosome complex is involved in general mRNA turnover and specifically degrades inherently unstable mRNAs containing AU-rich elements (AREs) within their 3' untranslated regions, and in RNA surveillance pathways, preventing translation of aberrant mRNAs. It seems to be involved in degradation of histone mRNA. The catalytic inactive RNA exosome core complex of 9 subunits (Exo-9) is proposed to play a pivotal role in the binding and presentation of RNA for ribonucleolysis, and to serve as a scaffold for the association with catalytic subunits and accessory proteins or complexes. EXOSC2 as peripheral part of the Exo-9 complex stabilizes the hexameric ring of RNase PH-domain subunits through contacts with EXOSC4 and EXOSC7. This chain is Exosome complex component RRP4 (EXOSC2), found in Bos taurus (Bovine).